Reading from the N-terminus, the 167-residue chain is uncharacterized protein (167 aa).

DED domains lie at 2 to 75 (DLKT…NLFQ) and 93 to 167 (THVL…AKTV).

This is an uncharacterized protein from Saimiriine herpesvirus 2 (strain 11) (SaHV-2).